We begin with the raw amino-acid sequence, 225 residues long: PKHD-type hydroxylase YbiX (225 aa).

A Fe2OG dioxygenase domain is found at 78 to 177; it reads TLSTPLFNRY…RVASFMWIQS (100 aa). Fe cation-binding residues include H96, D98, and H158. R168 serves as a coordination point for 2-oxoglutarate.

Fe(2+) serves as cofactor. L-ascorbate is required as a cofactor.

In Escherichia coli O6:K15:H31 (strain 536 / UPEC), this protein is PKHD-type hydroxylase YbiX.